A 259-amino-acid chain; its full sequence is Sesquipedalian-2 (259 aa).

One can recognise a PH domain in the interval Pro-17–Phe-121. The stretch at Met-124–Gln-150 forms a coiled coil. The tract at residues Ser-155–Asp-178 is disordered. The segment covering Ala-161–Asp-178 has biased composition (basic and acidic residues). A F&amp;H motif is present at residues Cys-223–Ile-235.

Belongs to the sesquipedalian family. Forms homodimers and heterodimers with PHETA1. Interacts with OCRL and INPP5B.

Its subcellular location is the early endosome. The protein resides in the recycling endosome. It is found in the golgi apparatus. The protein localises to the trans-Golgi network. It localises to the cytoplasmic vesicle. Its subcellular location is the clathrin-coated vesicle. In terms of biological role, plays a role in endocytic trafficking. Required for receptor recycling from endosomes, both to the trans-Golgi network and the plasma membrane. This Mus musculus (Mouse) protein is Sesquipedalian-2.